A 653-amino-acid chain; its full sequence is ATP-dependent rRNA helicase SPB4 (653 aa).

The Q motif motif lies at 17–45; that stretch reads WQALTPPLSEWILDAVAAMGFTRMTPVQA. Residues 48–257 form the Helicase ATP-binding domain; the sequence is IPLFMGHKDV…RVGLRNPVKI (210 aa). Residue 61–68 coordinates ATP; that stretch reads AVTGSGKT. Residues 205 to 208 carry the DEAD box motif; the sequence is DEAD. The Helicase C-terminal domain maps to 291–444; the sequence is AIRQILNSID…SPPVALSDTL (154 aa). The interval 534 to 653 is disordered; that stretch reads KQREKHRQES…DGESEFEGFD (120 aa). Over residues 558–569 the composition is skewed to polar residues; the sequence is PSSSSNNDTAPW. A coiled-coil region spans residues 571-627; sequence KTLEKKSDKEKRRERKRAKKEREHWEKMTEEEKTKSRETHQMLEELRKKNRQELNAK. Composition is skewed to basic and acidic residues over residues 572 to 581 and 590 to 626; these read TLEKKSDKEK and KEREHWEKMTEEEKTKSRETHQMLEELRKKNRQELNA. Over residues 627-636 the composition is skewed to polar residues; that stretch reads KSHTSSSVLS. Residues 641–653 are compositionally biased toward acidic residues; that stretch reads AELDGESEFEGFD.

Belongs to the DEAD box helicase family. DDX55/SPB4 subfamily. In terms of assembly, component of pre-60S ribosomal complexes.

Its subcellular location is the nucleus. It localises to the nucleolus. The catalysed reaction is ATP + H2O = ADP + phosphate + H(+). In terms of biological role, ATP-binding RNA helicase involved in the biogenesis of 60S ribosomal subunits. Binds 90S pre-ribosomal particles and dissociates from pre-60S ribosomal particles after processing of 27SB pre-rRNA. Required for the normal formation of 18S rRNA through the processing of pre-rRNAs at sites A0, A1 and A2, and the normal formation of 25S and 5.8S rRNAs through the processing of pre-rRNAs at sites C1 and C2. The polypeptide is ATP-dependent rRNA helicase SPB4 (Coccidioides immitis (strain RS) (Valley fever fungus)).